The chain runs to 309 residues: Elongation factor Ts (309 aa).

The segment at 82-85 is involved in Mg(2+) ion dislocation from EF-Tu; the sequence is TDFV.

It belongs to the EF-Ts family.

The protein localises to the cytoplasm. Associates with the EF-Tu.GDP complex and induces the exchange of GDP to GTP. It remains bound to the aminoacyl-tRNA.EF-Tu.GTP complex up to the GTP hydrolysis stage on the ribosome. This Rickettsia felis (strain ATCC VR-1525 / URRWXCal2) (Rickettsia azadi) protein is Elongation factor Ts.